Reading from the N-terminus, the 446-residue chain is Chromosomal replication initiator protein DnaA (446 aa).

A domain I, interacts with DnaA modulators region spans residues Met1–Pro81. Residues Pro81–Ser109 are domain II. The tract at residues Met110–Ser326 is domain III, AAA+ region. ATP is bound by residues Gly154, Gly156, Lys157, and Thr158. The domain IV, binds dsDNA stretch occupies residues Ser327–Lys446.

This sequence belongs to the DnaA family. Oligomerizes as a right-handed, spiral filament on DNA at oriC.

It is found in the cytoplasm. Functionally, plays an essential role in the initiation and regulation of chromosomal replication. ATP-DnaA binds to the origin of replication (oriC) to initiate formation of the DNA replication initiation complex once per cell cycle. Binds the DnaA box (a 9 base pair repeat at the origin) and separates the double-stranded (ds)DNA. Forms a right-handed helical filament on oriC DNA; dsDNA binds to the exterior of the filament while single-stranded (ss)DNA is stabiized in the filament's interior. The ATP-DnaA-oriC complex binds and stabilizes one strand of the AT-rich DNA unwinding element (DUE), permitting loading of DNA polymerase. After initiation quickly degrades to an ADP-DnaA complex that is not apt for DNA replication. Binds acidic phospholipids. This chain is Chromosomal replication initiator protein DnaA, found in Bacillus mycoides (strain KBAB4) (Bacillus weihenstephanensis).